A 396-amino-acid polypeptide reads, in one-letter code: Tryptophan synthase beta chain (396 aa).

Residue lysine 88 is modified to N6-(pyridoxal phosphate)lysine.

This sequence belongs to the TrpB family. In terms of assembly, tetramer of two alpha and two beta chains. It depends on pyridoxal 5'-phosphate as a cofactor.

The enzyme catalyses (1S,2R)-1-C-(indol-3-yl)glycerol 3-phosphate + L-serine = D-glyceraldehyde 3-phosphate + L-tryptophan + H2O. The protein operates within amino-acid biosynthesis; L-tryptophan biosynthesis; L-tryptophan from chorismate: step 5/5. Its function is as follows. The beta subunit is responsible for the synthesis of L-tryptophan from indole and L-serine. The polypeptide is Tryptophan synthase beta chain (Shewanella baltica (strain OS185)).